The following is a 61-amino-acid chain: Large ribosomal subunit protein uL30 (61 aa).

It belongs to the universal ribosomal protein uL30 family. Part of the 50S ribosomal subunit.

The polypeptide is Large ribosomal subunit protein uL30 (Jannaschia sp. (strain CCS1)).